The following is a 688-amino-acid chain: Glycine--tRNA ligase beta subunit (688 aa).

This sequence belongs to the class-II aminoacyl-tRNA synthetase family. As to quaternary structure, tetramer of two alpha and two beta subunits.

The protein resides in the cytoplasm. The catalysed reaction is tRNA(Gly) + glycine + ATP = glycyl-tRNA(Gly) + AMP + diphosphate. This chain is Glycine--tRNA ligase beta subunit, found in Actinobacillus pleuropneumoniae serotype 7 (strain AP76).